A 381-amino-acid chain; its full sequence is tRNA-specific 2-thiouridylase MnmA (381 aa).

Residues 26-33 (AMSGGVDS) and leucine 52 each bind ATP. Catalysis depends on cysteine 120, which acts as the Nucleophile. An intrachain disulfide couples cysteine 120 to cysteine 217. Glycine 144 contributes to the ATP binding site. Residues 166-168 (RDQ) are interaction with tRNA. Cysteine 217 acts as the Cysteine persulfide intermediate in catalysis.

It belongs to the MnmA/TRMU family.

The protein localises to the cytoplasm. The enzyme catalyses S-sulfanyl-L-cysteinyl-[protein] + uridine(34) in tRNA + AH2 + ATP = 2-thiouridine(34) in tRNA + L-cysteinyl-[protein] + A + AMP + diphosphate + H(+). Its function is as follows. Catalyzes the 2-thiolation of uridine at the wobble position (U34) of tRNA, leading to the formation of s(2)U34. The polypeptide is tRNA-specific 2-thiouridylase MnmA (Ruegeria sp. (strain TM1040) (Silicibacter sp.)).